A 243-amino-acid polypeptide reads, in one-letter code: Calcium-binding protein LPS1-beta (243 aa).

EF-hand domains follow at residues E15–E49, C47–E82, Y85–K120, L121–L156, C157–G189, Y191–D226, and D227–I243. Ca(2+) is bound by residues D29, N31, D33, T35, E40, D60, N62, D64, R66, E71, D98, D100, N102, R104, E109, D134, D136, D138, H140, E145, D167, N169, D171, S173, E178, D204, N206, D208, R210, and E215.

Aboral ectoderm, a squamous epithelium covering the surface of the late stage embryo and larva.

Its function is as follows. Calcium-binding protein involved in larval development and metamorphosis. Likely to function as calcium buffers mediating the transport of calcium from the sea water to the blastocoel where calcium is required for skeleton formation. The sequence is that of Calcium-binding protein LPS1-beta from Lytechinus pictus (Painted sea urchin).